Consider the following 348-residue polypeptide: MTQKLVTKPFIEVLSGNRQASPPMWMMRQAGRYLPEYRATRAEAGSFLDLCFNAKLAAEVTLQPIRRFGFDAAIIFSDILVVPYALGRAVRFEVGEGPRLDPLNSPDLVGTLNGAIDLSKLEPVFEALRIVRSELAPETTLIGFCGAPFTVATYMVAGQGTSDQHPARLMAYQHPGAFARIIDVLVESSIQYLLKQLEAGADVLQIFDTWGGILPPREFEKWCIEPTRRIVEGVRKVSPGAKIIGFPRGAGAMLPDFIARTGVDAVSIDWTAEPNMIRERVQSKVAVQGNLDPLLLIAGGSALDQGVDDVLKNFSAGRHIFNLGHGITPDAPVAHVEQMVKRVRAYKG.

Substrate is bound by residues 28–32 (RQAGR), Asp-78, Tyr-154, Thr-209, and His-325.

The protein belongs to the uroporphyrinogen decarboxylase family. As to quaternary structure, homodimer.

The protein resides in the cytoplasm. The enzyme catalyses uroporphyrinogen III + 4 H(+) = coproporphyrinogen III + 4 CO2. The protein operates within porphyrin-containing compound metabolism; protoporphyrin-IX biosynthesis; coproporphyrinogen-III from 5-aminolevulinate: step 4/4. Its function is as follows. Catalyzes the decarboxylation of four acetate groups of uroporphyrinogen-III to yield coproporphyrinogen-III. The sequence is that of Uroporphyrinogen decarboxylase from Rhodopseudomonas palustris (strain HaA2).